The primary structure comprises 376 residues: Heat-inducible transcription repressor HrcA (376 aa).

The protein belongs to the HrcA family.

Functionally, negative regulator of class I heat shock genes (grpE-dnaK-dnaJ and groELS operons). Prevents heat-shock induction of these operons. The sequence is that of Heat-inducible transcription repressor HrcA from Nostoc punctiforme (strain ATCC 29133 / PCC 73102).